A 345-amino-acid chain; its full sequence is N-acetyl-gamma-glutamyl-phosphate reductase (345 aa).

The active site involves Cys149.

Belongs to the NAGSA dehydrogenase family. Type 1 subfamily.

It is found in the cytoplasm. The enzyme catalyses N-acetyl-L-glutamate 5-semialdehyde + phosphate + NADP(+) = N-acetyl-L-glutamyl 5-phosphate + NADPH + H(+). The protein operates within amino-acid biosynthesis; L-arginine biosynthesis; N(2)-acetyl-L-ornithine from L-glutamate: step 3/4. Catalyzes the NADPH-dependent reduction of N-acetyl-5-glutamyl phosphate to yield N-acetyl-L-glutamate 5-semialdehyde. In Bacillus thuringiensis subsp. konkukian (strain 97-27), this protein is N-acetyl-gamma-glutamyl-phosphate reductase.